The chain runs to 613 residues: UvrABC system protein C (613 aa).

The region spanning 29–107 (DVAGVYKMLG…IKTLKPKYNI (79 aa)) is the GIY-YIG domain. The 36-residue stretch at 217-252 (KELQRELFDSMRKFSDNLDYESAMVYRDRLQALKSI) folds into the UVR domain.

The protein belongs to the UvrC family. Interacts with UvrB in an incision complex.

It is found in the cytoplasm. In terms of biological role, the UvrABC repair system catalyzes the recognition and processing of DNA lesions. UvrC both incises the 5' and 3' sides of the lesion. The N-terminal half is responsible for the 3' incision and the C-terminal half is responsible for the 5' incision. The sequence is that of UvrABC system protein C from Anaplasma marginale (strain St. Maries).